A 448-amino-acid polypeptide reads, in one-letter code: Phosphoglucosamine mutase (448 aa).

The active-site Phosphoserine intermediate is the Ser-104. Mg(2+) contacts are provided by Ser-104, Asp-245, Asp-247, and Asp-249. Ser-104 is subject to Phosphoserine.

Belongs to the phosphohexose mutase family. Mg(2+) is required as a cofactor. In terms of processing, activated by phosphorylation.

The catalysed reaction is alpha-D-glucosamine 1-phosphate = D-glucosamine 6-phosphate. Its function is as follows. Catalyzes the conversion of glucosamine-6-phosphate to glucosamine-1-phosphate. The protein is Phosphoglucosamine mutase of Caulobacter vibrioides (strain ATCC 19089 / CIP 103742 / CB 15) (Caulobacter crescentus).